The chain runs to 311 residues: CD-NTase-associated protein 6 (311 aa).

ATP is bound by residues 84–89 (GSGKTE) and 215–216 (RR).

This sequence belongs to the AAA ATPase family. Homohexamer. Forms a 1:1:6 CdnC:Cap7:Cap6 complex.

In terms of biological role, regulates complex assembly in a CBASS antivirus system. CBASS (cyclic oligonucleotide-based antiphage signaling system) provides immunity against bacteriophage. The CD-NTase protein synthesizes cyclic nucleotides in response to infection; these serve as specific second messenger signals. The signals activate a diverse range of effectors, leading to bacterial cell death and thus abortive phage infection. A type III-C(AAA) CBASS system. Its function is as follows. Binds and disassembles an active CdnC:Cap7 (Cap7 is also called HORMA) complex, inhibiting the complex's ability to synthesize cyclic nucleotide second messengers. An AAA+-ATPase remodeler, in the absence of foreign threat Cap6 (also called Trip13) probably maintains the Cap7 protein in its open, inactive state. Once activated (presumably by a bacteriophage protein) Cap7 binds to and activates its cognate CD-NTase (CdnC in this bacteria) to synthesize cAAA, a cyclic nucleotide second messenger. cAAA activates the NucC endonuclease which degrades all DNA in the infected cell, causing cell death and abortive phage infection. Protects E.coli strain JP313 against bacteriophage lambda cI- infection. When the cdnC-cap7-cap6-nucC operon is transformed into a susceptible E.coli strain it confers bacteriophage lambda cI- immunity. Mutations in the sensor (Cap7 also called HORMA) or effector proteins (CdnC, NucC) but not the disassembly protein (Cap6 also called Trip13) no longer confer immunity. The presence of the intact operon leads to culture collapse and cell death, which occurs before the phage has finished its replication cycle, thus protecting non-infected bacteria by aborting the phage infection and preventing its propagation. This is CD-NTase-associated protein 6 from Escherichia coli (strain MS 115-1).